Reading from the N-terminus, the 264-residue chain is Small ribosomal subunit protein uS2 (264 aa).

The interval 228–264 (VDTSATVDEEEAEVAEETESMESAEDLDADLIEEEAE) is disordered. Residues 234–264 (VDEEEAEVAEETESMESAEDLDADLIEEEAE) are compositionally biased toward acidic residues.

It belongs to the universal ribosomal protein uS2 family.

The sequence is that of Small ribosomal subunit protein uS2 from Symbiobacterium thermophilum (strain DSM 24528 / JCM 14929 / IAM 14863 / T).